We begin with the raw amino-acid sequence, 293 residues long: SAGA-associated factor 29 (293 aa).

Residues 3 to 88 are a coiled coil; that stretch reads LVSADSRIAE…KALDKIAEIK (86 aa). One can recognise an SGF29 C-terminal domain in the interval 152–293; it reads GDYVARPGDK…VVACKEPKKK (142 aa). Histone H3K4me3 N-terminus binding stretches follow at residues 194-196 and 240-243; these read DID and QTTC. The histone H3K4me3 binding stretch occupies residues 264–266; the sequence is FED. K288 bears the N6-acetyllysine mark.

It belongs to the SGF29 family. Interacts with dimethylated and trimethylated 'Lys-4' of histone H3 (H3K4me2 and H3K4me3), with a preference for the trimethylated form (H3K4me3). Component of some SAGA-type complexes. Component of the ADA2A-containing complex (ATAC), composed of KAT14, KAT2A, TADA2L, TADA3L, ZZ3, MBIP, WDR5, YEATS2, CCDC101 and DR1. Interacts with (methylated) CGAS. Interacts with TADA3L, GCN5L2, SUPT3H and MYC.

Its subcellular location is the nucleus. Its function is as follows. Chromatin reader component of some histone acetyltransferase (HAT) SAGA-type complexes like the TFTC-HAT, ATAC or STAGA complexes. SGF29 specifically recognizes and binds methylated 'Lys-4' of histone H3 (H3K4me), with a preference for trimethylated form (H3K4me3). In the SAGA-type complexes, SGF29 is required to recruit complexes to H3K4me. Involved in the response to endoplasmic reticulum (ER) stress by recruiting the SAGA complex to H3K4me, thereby promoting histone H3 acetylation and cell survival. Also binds non-histone proteins that are methylated on Lys residues: specifically recognizes and binds CGAS monomethylated on 'Lys-506'. This chain is SAGA-associated factor 29, found in Homo sapiens (Human).